Reading from the N-terminus, the 310-residue chain is MRRLLSPLFAALIVGVTVLTAPSTSWAYPFWAQQNYDSPREATGKIVCANCHLAQKLTQAEVPQSVLPDSVFKAVVKIPYDTSVPEIGADGSEVPLQVGAVVMLPDGFTLAPQDRWTDDIKEETEGVYFSEYSDDQPNVILVGPIPGDQHQEIVFPVLSPDPATDSNIHFGKYSIHVGGNRGRGQVYPTGEKSNNTVFTAPSTGTVRSIEAGENGASVVTIASADGTELSETVPVGPALIVSVGDAVEAGAPITNDPNVGGFGQLDTEVVLQNPVRIYGLLAFFAAVALAQIMLVLKKKQFEKVQAAEGV.

The first 27 residues, 1-27 (MRRLLSPLFAALIVGVTVLTAPSTSWA), serve as a signal peptide directing secretion. Heme-binding residues include Y28, C48, C51, and H52. The helical transmembrane segment at 277–297 (IYGLLAFFAAVALAQIMLVLK) threads the bilayer.

Belongs to the cytochrome f family. As to quaternary structure, the 4 large subunits of the cytochrome b6-f complex are cytochrome b6, subunit IV (17 kDa polypeptide, PetD), cytochrome f and the Rieske protein, while the 4 small subunits are PetG, PetL, PetM and PetN. The complex functions as a dimer. Heme is required as a cofactor.

It localises to the cellular thylakoid membrane. Functionally, component of the cytochrome b6-f complex, which mediates electron transfer between photosystem II (PSII) and photosystem I (PSI), cyclic electron flow around PSI, and state transitions. This chain is Cytochrome f, found in Synechococcus sp. (strain WH7803).